The chain runs to 234 residues: Exotoxin type G (234 aa).

Residues 1-24 (MKTNILTIIILSCVFSYGSQLAYA) form the signal peptide.

The protein belongs to the staphylococcal/streptococcal toxin family.

Functionally, mitogenic for human peripheral blood lymphocytes. The sequence is that of Exotoxin type G (speG) from Streptococcus pyogenes serotype M1.